A 113-amino-acid chain; its full sequence is Large ribosomal subunit protein uL22 (113 aa).

The protein belongs to the universal ribosomal protein uL22 family. In terms of assembly, part of the 50S ribosomal subunit.

Functionally, this protein binds specifically to 23S rRNA; its binding is stimulated by other ribosomal proteins, e.g. L4, L17, and L20. It is important during the early stages of 50S assembly. It makes multiple contacts with different domains of the 23S rRNA in the assembled 50S subunit and ribosome. The globular domain of the protein is located near the polypeptide exit tunnel on the outside of the subunit, while an extended beta-hairpin is found that lines the wall of the exit tunnel in the center of the 70S ribosome. The protein is Large ribosomal subunit protein uL22 of Neorickettsia sennetsu (strain ATCC VR-367 / Miyayama) (Ehrlichia sennetsu).